A 541-amino-acid chain; its full sequence is MCKDKNEKKNYEHVNANEKNGYLASEKNELTKNKVEEHTYDYDYVVIGGGPGGMASAKEAAAHGARVLLFDYVKPSSQGTKWGIGGTCVNVGCVPKKLMHYAGHMGSIFKLDSKAYGWKFDNLKHDWKKLVTTVQSHIRSLNFSYMTGLRSSKVKYINGLAKLKDKNTVSYYLKGDLSKEETVTGKYILIATGCRPHIPDDVEGAKELSITSDDIFSLKKDPGKTLVVGASYVALECSGFLNSLGYDVTVAVRSIVLRGFDQQCAVKVKLYMEEQGVMFKNGILPKKLTKMDDKILVEFSDKTSELYDTVLYAIGRKGDIDGLNLESLNMNVNKSNNKIIADHLSCTNIPSIFAVGDVAENVPELAPVAIKAGEILARRLFKDSDEIMDYSYIPTSIYTPIEYGACGYSEEKAYELYGKSNVEVFLQEFNNLEISAVHRQKHIRAQKDEYDLDVSSTCLAKLVCLKNEDNRVIGFHYVGPNAGEVTQGMALALRLKVKKKDFDNCIGIHPTDAESFMNLFVTISSGLSYAAKGGCGGGKCG.

FAD is bound by residues 51 to 52, 71 to 74, 87 to 88, 92 to 96, alanine 161, aspartate 357, and 364 to 366; these read PG, DYVK, TC, GCVPK, and ELA. A disulfide bond links cysteine 88 and cysteine 93. Residues 438–452 form a loop important for the interaction with TRX1 region; it reads HRQKHIRAQKDEYDL. FAD is bound at residue histidine 509. Histidine 509 functions as the Proton acceptor in the catalytic mechanism. Residues cysteine 535 and cysteine 540 are joined by a disulfide bond.

The protein belongs to the class-I pyridine nucleotide-disulfide oxidoreductase family. Homodimer. FAD serves as cofactor.

The protein localises to the cytoplasm. The catalysed reaction is [thioredoxin]-dithiol + NADP(+) = [thioredoxin]-disulfide + NADPH + H(+). Catalyzes the transfer of electrons from NADPH to thioredoxins TRX1, TRX2 and TRX3, which in turn act as reductants of disulfide containing proteins. Able to reduce nitroglutathione (GSNO), a compound involved in the transport of nitric oxide (NO); however, TRX1 is more efficient in reducing GSNO. Has no catalytic activity towards oxidized glutathione (GSSG). This is Thioredoxin reductase from Plasmodium falciparum (isolate FCH-5).